Reading from the N-terminus, the 222-residue chain is PKHD-type hydroxylase Syncc9605_1577 (222 aa).

In terms of domain architecture, Fe2OG dioxygenase spans 80–175 (KVHSLLVSRS…RYVCVGWIES (96 aa)). Residues His-98, Asp-100, and His-156 each contribute to the Fe cation site. Arg-166 provides a ligand contact to 2-oxoglutarate.

Requires Fe(2+) as cofactor. L-ascorbate serves as cofactor.

The protein is PKHD-type hydroxylase Syncc9605_1577 of Synechococcus sp. (strain CC9605).